Here is a 540-residue protein sequence, read N- to C-terminus: Cytochrome bc1 complex cytochrome b subunit (540 aa).

A helical membrane pass occupies residues 40-60; it reads EIALYSFIILLLTGVYLTLFF. Heme-binding residues include histidine 105 and histidine 119. Transmembrane regions (helical) follow at residues 109–129, 137–157, and 169–189; these read ALTF…TGAF, WIIG…GYSL, and IMSA…WLIF. 2 residues coordinate heme: histidine 206 and histidine 221. Helical transmembrane passes span 207 to 227, 259 to 279, 325 to 345, 371 to 391, and 408 to 428; these read VLII…LVWY, FGLV…INAI, AFWV…YPFI, LGVM…NDLF, and IGLI…CLGL.

The protein belongs to the cytochrome b family. As to quaternary structure, the cytochrome bc1 complex is composed of a cytochrome b (QcrB), the Rieske protein iron-sulfur (QcrA) and a diheme cytochrome c (QcrC) subunit. Heme serves as cofactor.

The protein localises to the cell membrane. The catalysed reaction is a quinol + 2 Fe(III)-[cytochrome c](out) = a quinone + 2 Fe(II)-[cytochrome c](out) + 2 H(+)(out). Its function is as follows. Cytochrome b subunit of the cytochrome bc1 complex, an essential component of the respiratory electron transport chain required for ATP synthesis. The bc1 complex catalyzes the oxidation of menaquinol and the reduction of cytochrome c in the respiratory chain. The bc1 complex operates through a Q-cycle mechanism that couples electron transfer to generation of the proton gradient that drives ATP synthesis. This is Cytochrome bc1 complex cytochrome b subunit (qcrB) from Corynebacterium diphtheriae (strain ATCC 700971 / NCTC 13129 / Biotype gravis).